Here is a 412-residue protein sequence, read N- to C-terminus: Adenylosuccinate synthetase (412 aa).

GTP contacts are provided by residues 12–18 (GDEGKGK) and 40–42 (GHE). Residue D13 is the Proton acceptor of the active site. D13 and G40 together coordinate Mg(2+). Residues 13–16 (DEGK), 38–41 (NAGH), R134, N212, T227, and R291 contribute to the IMP site. The active-site Proton donor is H41. 287-293 (TSTGRRR) is a substrate binding site. GTP-binding positions include R293, 318 to 320 (KLD), and 400 to 402 (GTG).

The protein belongs to the adenylosuccinate synthetase family. Homodimer. It depends on Mg(2+) as a cofactor.

The protein resides in the cytoplasm. It catalyses the reaction IMP + L-aspartate + GTP = N(6)-(1,2-dicarboxyethyl)-AMP + GDP + phosphate + 2 H(+). Its pathway is purine metabolism; AMP biosynthesis via de novo pathway; AMP from IMP: step 1/2. In terms of biological role, plays an important role in the de novo pathway and in the salvage pathway of purine nucleotide biosynthesis. Catalyzes the first committed step in the biosynthesis of AMP from IMP. This Fusarium vanettenii (strain ATCC MYA-4622 / CBS 123669 / FGSC 9596 / NRRL 45880 / 77-13-4) (Fusarium solani subsp. pisi) protein is Adenylosuccinate synthetase.